The primary structure comprises 364 residues: tRNA/tmRNA (uracil-C(5))-methyltransferase (364 aa).

Gln186, Tyr214, Asn219, Glu235, and Asp295 together coordinate S-adenosyl-L-methionine. The active-site Nucleophile is Cys320. The active-site Proton acceptor is Glu354.

Belongs to the class I-like SAM-binding methyltransferase superfamily. RNA M5U methyltransferase family. TrmA subfamily.

It catalyses the reaction uridine(54) in tRNA + S-adenosyl-L-methionine = 5-methyluridine(54) in tRNA + S-adenosyl-L-homocysteine + H(+). It carries out the reaction uridine(341) in tmRNA + S-adenosyl-L-methionine = 5-methyluridine(341) in tmRNA + S-adenosyl-L-homocysteine + H(+). Functionally, dual-specificity methyltransferase that catalyzes the formation of 5-methyluridine at position 54 (m5U54) in all tRNAs, and that of position 341 (m5U341) in tmRNA (transfer-mRNA). This chain is tRNA/tmRNA (uracil-C(5))-methyltransferase, found in Azoarcus sp. (strain BH72).